Consider the following 164-residue polypeptide: Phosphopantetheine adenylyltransferase (164 aa).

Thr-10 contacts substrate. Residues 10–11 (TF) and His-18 contribute to the ATP site. Lys-42, Leu-74, and Arg-88 together coordinate substrate. Residues 89–91 (GIR), Glu-99, and 124–130 (YAFVSST) each bind ATP.

Belongs to the bacterial CoaD family. Homohexamer. It depends on Mg(2+) as a cofactor.

Its subcellular location is the cytoplasm. It carries out the reaction (R)-4'-phosphopantetheine + ATP + H(+) = 3'-dephospho-CoA + diphosphate. Its pathway is cofactor biosynthesis; coenzyme A biosynthesis; CoA from (R)-pantothenate: step 4/5. Reversibly transfers an adenylyl group from ATP to 4'-phosphopantetheine, yielding dephospho-CoA (dPCoA) and pyrophosphate. This Tolumonas auensis (strain DSM 9187 / NBRC 110442 / TA 4) protein is Phosphopantetheine adenylyltransferase.